We begin with the raw amino-acid sequence, 214 residues long: Peroxiredoxin-5, mitochondrial (214 aa).

Residues 1–52 constitute a mitochondrion transit peptide; it reads MGLAGVCALRRSAGYILVGGAGGQSAAAAARRYSEGEWASGGVRSFSRAAAA. The 159-residue stretch at 56–214 folds into the Thioredoxin domain; the sequence is IKVGDAIPAV…SLAPNIISQL (159 aa). N6-acetyllysine is present on lysine 75. Lysine 83 is subject to N6-acetyllysine; alternate. Lysine 83 bears the N6-succinyllysine; alternate mark. The active-site Cysteine sulfenic acid (-SOH) intermediate is the cysteine 100. The S-palmitoyl cysteine moiety is linked to residue cysteine 100. A disulfide bond links cysteine 100 and cysteine 204. Lysine 116 bears the N6-succinyllysine mark. Serine 171 and serine 182 each carry phosphoserine. The Microbody targeting signal signature appears at 212–214; it reads SQL.

This sequence belongs to the peroxiredoxin family. Prx5 subfamily. In terms of assembly, monomer. In terms of processing, S-palmitoylated. Palmitoylation occurs on the active site, inhibiting its reactivity; therefore PRDX5 palmitoylation status determines its antioxidant capacity. S-palmitoylated. Depalmitoylated by ABHD10. As to expression, widely expressed.

Its subcellular location is the mitochondrion. The protein localises to the cytoplasm. It is found in the peroxisome matrix. The catalysed reaction is a hydroperoxide + [thioredoxin]-dithiol = an alcohol + [thioredoxin]-disulfide + H2O. Thiol-specific peroxidase that catalyzes the reduction of hydrogen peroxide and organic hydroperoxides to water and alcohols, respectively. Plays a role in cell protection against oxidative stress by detoxifying peroxides and as sensor of hydrogen peroxide-mediated signaling events. This Homo sapiens (Human) protein is Peroxiredoxin-5, mitochondrial.